The sequence spans 381 residues: Cyclin-dependent kinase inhibitor CIP1 (381 aa).

Residues 1 to 11 are compositionally biased toward basic residues; it reads MLLERLHKRLH. Positions 1-30 are disordered; the sequence is MLLERLHKRLHAGSSRRSQENKDKNCKPED. The span at 17-30 shows a compositional bias: basic and acidic residues; it reads RSQENKDKNCKPED. Thr-65, Thr-69, and Thr-73 each carry phosphothreonine.

As to quaternary structure, interact with the CDC28/CLN2 complex. In terms of processing, phosphorylated during S phase in a CDC28-dependent manner. Phosphorylated at Thr-65 and Thr-73 by HOG1 under osmotic stress. The phosphorylations of Thr-65 and Thr-73 are necessary for CIP1-induced growth inhibition.

The protein resides in the cytoplasm. The protein localises to the nucleus. In terms of biological role, acts as an inhibitor of the CDC28/CLN2 cyclin-dependent kinase complex. Stabilizes the CDC28 inhibitor SIC1. Negatively regulates the G1/S phase transition. Contributes to osmostress-induced transitory G1 delay. The protein is Cyclin-dependent kinase inhibitor CIP1 of Saccharomyces cerevisiae (strain ATCC 204508 / S288c) (Baker's yeast).